The primary structure comprises 354 residues: Probable alcohol acetyltransferase (354 aa).

Residues S124 and H293 each act as charge relay system in the active site.

It belongs to the AB hydrolase superfamily.

Its function is as follows. Probable alcohol acetyltransferase that uses acetyl-CoA to synthesize acetate esters from various alcohols. Not involved in the synthesis of ethyl acetate. The sequence is that of Probable alcohol acetyltransferase (EAT2) from Cyberlindnera jadinii (strain ATCC 18201 / CBS 1600 / BCRC 20928 / JCM 3617 / NBRC 0987 / NRRL Y-1542) (Torula yeast).